Consider the following 287-residue polypeptide: Cis-prenyltransferase 7, chloroplastic (287 aa).

The transit peptide at 1–34 (MLSLGFSLPPPSDNKLIITNNNQYNYRTNLANVC) directs the protein to the chloroplast. The active site involves D61.

It belongs to the UPP synthase family. Mg(2+) serves as cofactor. In terms of tissue distribution, expressed in leaf trichomes and stem trichomes.

The protein resides in the plastid. Its subcellular location is the chloroplast. Functionally, uses geranylgeranyl diphosphate to catalyze the cis-prenyl chain elongation and produce polyprenyl diphosphate with a chain of 35 carbons. This Solanum lycopersicum (Tomato) protein is Cis-prenyltransferase 7, chloroplastic.